We begin with the raw amino-acid sequence, 89 residues long: MALTSEQKKSILSEFGLHETDTGSPEAQIALLTNRINNLTEHLKFHKHDHHSRRGLLLLVGRRRGLLKYLADNNVDRYRDLIARLGLRR.

It belongs to the universal ribosomal protein uS15 family. As to quaternary structure, part of the 30S ribosomal subunit. Forms a bridge to the 50S subunit in the 70S ribosome, contacting the 23S rRNA.

One of the primary rRNA binding proteins, it binds directly to 16S rRNA where it helps nucleate assembly of the platform of the 30S subunit by binding and bridging several RNA helices of the 16S rRNA. In terms of biological role, forms an intersubunit bridge (bridge B4) with the 23S rRNA of the 50S subunit in the ribosome. The sequence is that of Small ribosomal subunit protein uS15 from Corynebacterium glutamicum (strain R).